A 464-amino-acid chain; its full sequence is NADH dehydrogenase [ubiquinone] flavoprotein 1, mitochondrial (464 aa).

The transit peptide at methionine 1–phenylalanine 20 directs the protein to the mitochondrion. Residue lysine 81 is modified to N6-acetyllysine; alternate. The residue at position 81 (lysine 81) is an N6-succinyllysine; alternate. Position 87-96 (glycine 87–glycine 96) interacts with NADH. At lysine 104 the chain carries N6-acetyllysine. Arginine 199–threonine 247 lines the FMN pocket. The residue at position 257 (arginine 257) is an Omega-N-methylarginine. Lysine 375 is subject to N6-acetyllysine. Cysteine 379, cysteine 382, cysteine 385, and cysteine 425 together coordinate [4Fe-4S] cluster.

The protein belongs to the complex I 51 kDa subunit family. In terms of assembly, core subunit of respiratory chain NADH dehydrogenase (Complex I) which is composed of 45 different subunits. This is a component of the flavoprotein-sulfur (FP) fragment of the enzyme. Interacts with RAB5IF. The cofactor is FMN. [4Fe-4S] cluster serves as cofactor.

It is found in the mitochondrion inner membrane. The catalysed reaction is a ubiquinone + NADH + 5 H(+)(in) = a ubiquinol + NAD(+) + 4 H(+)(out). Functionally, core subunit of the mitochondrial membrane respiratory chain NADH dehydrogenase (Complex I) which catalyzes electron transfer from NADH through the respiratory chain, using ubiquinone as an electron acceptor. Part of the peripheral arm of the enzyme, where the electrons from NADH are accepted by flavin mononucleotide (FMN) and then passed along a chain of iron-sulfur clusters by electron tunnelling to the final acceptor ubiquinone. Contains FMN, which is the initial electron acceptor as well as one iron-sulfur cluster. This is NADH dehydrogenase [ubiquinone] flavoprotein 1, mitochondrial from Pan troglodytes (Chimpanzee).